A 319-amino-acid chain; its full sequence is Ribonuclease Z (319 aa).

Zn(2+)-binding residues include His-62, His-64, Asp-66, His-67, His-145, Asp-215, and His-273. The active-site Proton acceptor is the Asp-66.

It belongs to the RNase Z family. Homodimer. Requires Zn(2+) as cofactor.

It catalyses the reaction Endonucleolytic cleavage of RNA, removing extra 3' nucleotides from tRNA precursor, generating 3' termini of tRNAs. A 3'-hydroxy group is left at the tRNA terminus and a 5'-phosphoryl group is left at the trailer molecule.. Functionally, zinc phosphodiesterase, which displays some tRNA 3'-processing endonuclease activity. Probably involved in tRNA maturation, by removing a 3'-trailer from precursor tRNA. This chain is Ribonuclease Z, found in Borrelia hermsii (strain HS1 / DAH).